A 237-amino-acid chain; its full sequence is Ribosomal RNA small subunit methyltransferase G (237 aa).

S-adenosyl-L-methionine-binding positions include Gly78, Phe83, 129-130 (AE), and Arg148. Residues 218 to 237 (KKETPNKYPRKAGMPNKRPL) form a disordered region.

Belongs to the methyltransferase superfamily. RNA methyltransferase RsmG family.

Its subcellular location is the cytoplasm. Its function is as follows. Specifically methylates the N7 position of a guanine in 16S rRNA. This Streptococcus pneumoniae (strain ATCC BAA-255 / R6) protein is Ribosomal RNA small subunit methyltransferase G.